The chain runs to 303 residues: Elongation factor Ts (303 aa).

The tract at residues 80–83 is involved in Mg(2+) ion dislocation from EF-Tu; sequence TDFV.

Belongs to the EF-Ts family.

It is found in the cytoplasm. Functionally, associates with the EF-Tu.GDP complex and induces the exchange of GDP to GTP. It remains bound to the aminoacyl-tRNA.EF-Tu.GTP complex up to the GTP hydrolysis stage on the ribosome. The polypeptide is Elongation factor Ts (Clostridium botulinum (strain Alaska E43 / Type E3)).